We begin with the raw amino-acid sequence, 63 residues long: Large ribosomal subunit protein uL29 (63 aa).

It belongs to the universal ribosomal protein uL29 family.

The sequence is that of Large ribosomal subunit protein uL29 from Yersinia pseudotuberculosis serotype O:1b (strain IP 31758).